The primary structure comprises 79 residues: Putative defensin-like protein 137 (79 aa).

Positions 1-24 (MKKYFQPSFVILIIFTVLVLGVVG) are cleaved as a signal peptide. 4 cysteine pairs are disulfide-bonded: C33/C78, C42/C62, C47/C72, and C51/C74.

This sequence belongs to the DEFL family.

The protein resides in the secreted. In Arabidopsis thaliana (Mouse-ear cress), this protein is Putative defensin-like protein 137 (LCR14).